Reading from the N-terminus, the 378-residue chain is Ribosomal RNA large subunit methyltransferase G (378 aa).

Belongs to the methyltransferase superfamily. RlmG family.

The protein localises to the cytoplasm. It carries out the reaction guanosine(1835) in 23S rRNA + S-adenosyl-L-methionine = N(2)-methylguanosine(1835) in 23S rRNA + S-adenosyl-L-homocysteine + H(+). Functionally, specifically methylates the guanine in position 1835 (m2G1835) of 23S rRNA. This is Ribosomal RNA large subunit methyltransferase G from Shigella flexneri serotype 5b (strain 8401).